The primary structure comprises 189 residues: Glutathione-dependent formaldehyde-activating enzyme (189 aa).

One can recognise a CENP-V/GFA domain in the interval 20–167; that stretch reads FAGGTLVCKC…LKELGLEPYD (148 aa). Residues cysteine 27, cysteine 29, cysteine 48, cysteine 50, cysteine 53, cysteine 95, and cysteine 98 each contribute to the Zn(2+) site.

Belongs to the Gfa family. It depends on Zn(2+) as a cofactor.

It catalyses the reaction S-(hydroxymethyl)glutathione = glutathione + formaldehyde. The protein operates within one-carbon metabolism; formaldehyde degradation; formate from formaldehyde (glutathione route): step 1/3. Its function is as follows. Catalyzes the condensation of formaldehyde and glutathione to S-hydroxymethylglutathione. The polypeptide is Glutathione-dependent formaldehyde-activating enzyme (Rhodopseudomonas palustris (strain BisA53)).